The primary structure comprises 290 residues: MTSTKEIKNKIVSVTNTKKITKAMEMVAVSKMRKTEERMRSGRPYSDIIRKVIDHVTQGNLEYKHSYLEERKTNRIGMIIISTDRGLCGGLNTNLFKQVLFKIQNFAKVNIPCDLILFGLKSLSVFKLCGSNILAKATNLGENPKLEELINSVGIILQEYQCKRIDKIFIAYNKFHNKMSQYPTITQLLPFSKKNDQDASNNNWDYLYEPESKLILDTLFNRYIESQVYQSILENIASEHAARMIAMKTATDNSGNRIKELQLVYNKVRQANITQELNEIVSGASAVSID.

This sequence belongs to the ATPase gamma chain family. In terms of assembly, F-type ATPases have 2 components, CF(1) - the catalytic core - and CF(0) - the membrane proton channel. CF(1) has five subunits: alpha(3), beta(3), gamma(1), delta(1), epsilon(1). CF(0) has three main subunits: a, b and c.

The protein localises to the cell inner membrane. Functionally, produces ATP from ADP in the presence of a proton gradient across the membrane. The gamma chain is believed to be important in regulating ATPase activity and the flow of protons through the CF(0) complex. The polypeptide is ATP synthase gamma chain (Buchnera aphidicola subsp. Acyrthosiphon pisum (strain APS) (Acyrthosiphon pisum symbiotic bacterium)).